A 262-amino-acid chain; its full sequence is Thiazole synthase (262 aa).

Lys-105 serves as the catalytic Schiff-base intermediate with DXP. 1-deoxy-D-xylulose 5-phosphate-binding positions include Gly-166, 192–193 (AG), and 214–215 (NT).

This sequence belongs to the ThiG family. In terms of assembly, homotetramer. Forms heterodimers with either ThiH or ThiS.

It is found in the cytoplasm. The catalysed reaction is [ThiS sulfur-carrier protein]-C-terminal-Gly-aminoethanethioate + 2-iminoacetate + 1-deoxy-D-xylulose 5-phosphate = [ThiS sulfur-carrier protein]-C-terminal Gly-Gly + 2-[(2R,5Z)-2-carboxy-4-methylthiazol-5(2H)-ylidene]ethyl phosphate + 2 H2O + H(+). Its pathway is cofactor biosynthesis; thiamine diphosphate biosynthesis. Its function is as follows. Catalyzes the rearrangement of 1-deoxy-D-xylulose 5-phosphate (DXP) to produce the thiazole phosphate moiety of thiamine. Sulfur is provided by the thiocarboxylate moiety of the carrier protein ThiS. In vitro, sulfur can be provided by H(2)S. The polypeptide is Thiazole synthase (Phenylobacterium zucineum (strain HLK1)).